A 498-amino-acid polypeptide reads, in one-letter code: Actin-binding protein WASF2 (498 aa).

2 disordered regions span residues 173–203 (KEKR…KEEW) and 240–435 (NVDA…AVSD). Residues 252 to 263 (SDSASSPSPSFS) show a composition bias toward low complexity. Positions 298–407 (SHPPPAPPLG…PPPGPPPPPF (110 aa)) are enriched in pro residues. The WH2 domain maps to 436–453 (ARSDLLSAIRQGFQLRRV). A Phosphoserine modification is found at S474.

Belongs to the SCAR/WAVE family. As to quaternary structure, binds actin and the Arp2/3 complex. Interacts with BAIAP2. Component of the WAVE2 complex composed of ABI1, CYFIP1/SRA1, NCKAP1/NAP1 (NCKAP1l/HEM1 in hematopoietic cells) and WASF2/WAVE2. Directly interacts with BRK1. Interacts with FNBP1L (via the SH3 domain). In terms of assembly, (Microbial infection) Interacts with human cytomegalovirus protein UL135. As to expression, expressed in all tissues with strongest expression in placenta, lung, and peripheral blood leukocytes, but not in skeletal muscle.

The protein localises to the cytoplasm. Its subcellular location is the cytoskeleton. It localises to the cell projection. The protein resides in the lamellipodium. It is found in the basolateral cell membrane. Its function is as follows. Downstream effector molecule involved in the transmission of signals from tyrosine kinase receptors and small GTPases to the actin cytoskeleton. Promotes formation of actin filaments. Part of the WAVE complex that regulates lamellipodia formation. The WAVE complex regulates actin filament reorganization via its interaction with the Arp2/3 complex. This chain is Actin-binding protein WASF2, found in Homo sapiens (Human).